The chain runs to 331 residues: Serine racemase (331 aa).

2 residues coordinate ATP: Ser-34 and Lys-54. The active-site Proton acceptor is the Lys-59. An N6-(pyridoxal phosphate)lysine modification is found at Lys-59. Position 81 (Thr-81) interacts with Ca(2+). Ser-84 acts as the Proton acceptor in catalysis. Position 86 (Asn-86) interacts with pyridoxal 5'-phosphate. Residue Tyr-121 participates in ATP binding. Asp-178 provides a ligand contact to Mg(2+). Positions 186, 187, and 188 each coordinate pyridoxal 5'-phosphate. Ca(2+) contacts are provided by Glu-210, Ala-214, and Asp-216. Residues Glu-210, Ala-214, and Asp-216 each contribute to the Mg(2+) site. Positions 210, 214, and 216 each coordinate Mn(2+). Lys-278 is a binding site for ATP. Residue Ser-314 coordinates pyridoxal 5'-phosphate. Asn-317 is a binding site for ATP.

The protein belongs to the serine/threonine dehydratase family. Homodimer. Requires Mg(2+) as cofactor. Mn(2+) serves as cofactor. It depends on Ca(2+) as a cofactor. Pyridoxal 5'-phosphate is required as a cofactor. In terms of tissue distribution, expressed in the whole plant.

It carries out the reaction L-serine = D-serine. The enzyme catalyses L-serine = pyruvate + NH4(+). It catalyses the reaction D-serine = pyruvate + NH4(+). With respect to regulation, inhibited by hydroxylamine. Racemase activity is enhanced by Ca(2+), Mg(2+), Mn(2+), and is decreased by Ni(2+), Zn(2+). Hydratase activity is enhanced by Ca(2+), Mg(2+), Mn(2+), Cu(2+), Fe(2+), Ni(2+). In terms of biological role, catalyzes the synthesis of D-serine from L-serine. Has dehydratase activity towards both L-serine and D-serine. Displays high substrate specificity for L-serine, whereas L-alanine, L-arginine, and L-glutamine were poor substrates. This Arabidopsis thaliana (Mouse-ear cress) protein is Serine racemase (SR).